The primary structure comprises 141 residues: ATP synthase epsilon chain (141 aa).

Belongs to the ATPase epsilon chain family. F-type ATPases have 2 components, CF(1) - the catalytic core - and CF(0) - the membrane proton channel. CF(1) has five subunits: alpha(3), beta(3), gamma(1), delta(1), epsilon(1). CF(0) has three main subunits: a, b and c.

It localises to the cell membrane. Functionally, produces ATP from ADP in the presence of a proton gradient across the membrane. This Mycoplasma mobile (strain ATCC 43663 / 163K / NCTC 11711) (Mesomycoplasma mobile) protein is ATP synthase epsilon chain.